The sequence spans 80 residues: MDMKNMREYMSWLYYQYLLITGIYVLEPWEQSIFNTVLFTMVAMVIYTSYVFVPIHVRLALEFFCELVGGQPESTVALMT.

Residues 1-11 are Cytoplasmic-facing; the sequence is MDMKNMREYMS. A helical transmembrane segment spans residues 12-29; it reads WLYYQYLLITGIYVLEPW. The Lumenal segment spans residues 30-36; sequence EQSIFNT. A helical transmembrane segment spans residues 37-57; it reads VLFTMVAMVIYTSYVFVPIHV. Residues 58-80 lie on the Cytoplasmic side of the membrane; it reads RLALEFFCELVGGQPESTVALMT.

Belongs to the SPTSS family. SPTSSB subfamily. As to quaternary structure, component of the serine palmitoyltransferase (SPT) complex, which is composed of SPTLC1, SPTLC2 or SPTLC3 and SPTSSA or SPTSSB. The heterodimer consisting of SPTLC1 and SPTLC2/SPTLC3 forms the catalytic core of the enzyme, while SPTSSA or SPTSSB subunits determine substrate specificity. SPT also interacts with ORMDL proteins, especially ORMDL3, which negatively regulate SPT activity in the presence of ceramides.

It is found in the endoplasmic reticulum membrane. The protein operates within lipid metabolism; sphingolipid metabolism. Component of the serine palmitoyltransferase multisubunit enzyme (SPT) that catalyzes the initial and rate-limiting step in sphingolipid biosynthesis by condensing L-serine and activated acyl-CoA (most commonly palmitoyl-CoA) to form long-chain bases. The SPT complex is composed of SPTLC1, SPTLC2 or SPTLC3 and SPTSSA or SPTSSB. Within this complex, the heterodimer consisting of SPTLC1 and SPTLC2/SPTLC3 forms the catalytic core. Within the SPT complex, SPTSSB stimulates the catalytic activity and plays a role in substrate specificity. SPT complexes with this subunit showing a preference for longer acyl-CoAs. The SPTLC1-SPTLC2-SPTSSB complex shows a strong preference for C18-CoA substrate, while the SPTLC1-SPTLC3-SPTSSB isozyme displays an ability to use a broader range of acyl-CoAs, without apparent preference. The sequence is that of Serine palmitoyltransferase small subunit B (sptssb) from Danio rerio (Zebrafish).